A 257-amino-acid polypeptide reads, in one-letter code: Isoprenyl transferase (257 aa).

D37 is an active-site residue. A Mg(2+)-binding site is contributed by D37. Substrate-binding positions include G38 to R41, W42, R50, H54, and S82 to E84. N85 serves as the catalytic Proton acceptor. Residues W86, R88, R205, and R211–S213 each bind substrate. Residue E224 coordinates Mg(2+).

This sequence belongs to the UPP synthase family. Homodimer. Mg(2+) serves as cofactor.

In terms of biological role, catalyzes the condensation of isopentenyl diphosphate (IPP) with allylic pyrophosphates generating different type of terpenoids. In Shouchella clausii (strain KSM-K16) (Alkalihalobacillus clausii), this protein is Isoprenyl transferase.